Here is a 332-residue protein sequence, read N- to C-terminus: MQTNLLKPKTINVEQLGHNRAKVVLEPFERGYGHTLGNALRRVLLSSMVGYAATEVTIAGVLHEYSSIDGVQEDVVNILLNLKGVVFKLHNRDEVTLSLRKDGEGVVTARDIQTPHDVEIINPDHVIANLSQGGKLDMQIKVEKGRGYVPGNVRRYGDESTKSIGRIVLDASFSPVKRVSYAVESARVEQRTDLDKLVVEIETNGAITAEDAVRASAKILVEQLAVFAQLDGGDIASVFDAPAGGRGAATAFDPILLRPVDELELTVRSANCLKAENIYYIGDLIQRTENELLKTPNLGRKSLNEIKEVLASRGLTLGMKLENWPPAGLEKR.

Residues 1–231 (MQTNLLKPKT…EQLAVFAQLD (231 aa)) form an alpha N-terminal domain (alpha-NTD) region. The tract at residues 252–332 (FDPILLRPVD…NWPPAGLEKR (81 aa)) is alpha C-terminal domain (alpha-CTD).

This sequence belongs to the RNA polymerase alpha chain family. Homodimer. The RNAP catalytic core consists of 2 alpha, 1 beta, 1 beta' and 1 omega subunit. When a sigma factor is associated with the core the holoenzyme is formed, which can initiate transcription.

The enzyme catalyses RNA(n) + a ribonucleoside 5'-triphosphate = RNA(n+1) + diphosphate. Its function is as follows. DNA-dependent RNA polymerase catalyzes the transcription of DNA into RNA using the four ribonucleoside triphosphates as substrates. This Delftia acidovorans (strain DSM 14801 / SPH-1) protein is DNA-directed RNA polymerase subunit alpha.